Here is a 192-residue protein sequence, read N- to C-terminus: dTTP/UTP pyrophosphatase (192 aa).

Catalysis depends on aspartate 70, which acts as the Proton acceptor.

The protein belongs to the Maf family. YhdE subfamily. A divalent metal cation serves as cofactor.

The protein resides in the cytoplasm. It catalyses the reaction dTTP + H2O = dTMP + diphosphate + H(+). The catalysed reaction is UTP + H2O = UMP + diphosphate + H(+). In terms of biological role, nucleoside triphosphate pyrophosphatase that hydrolyzes dTTP and UTP. May have a dual role in cell division arrest and in preventing the incorporation of modified nucleotides into cellular nucleic acids. This Clostridium perfringens (strain ATCC 13124 / DSM 756 / JCM 1290 / NCIMB 6125 / NCTC 8237 / Type A) protein is dTTP/UTP pyrophosphatase.